The chain runs to 92 residues: Putative lambdoid prophage defective integrase (92 aa).

It belongs to the 'phage' integrase family.

This is Putative lambdoid prophage defective integrase (intG) from Escherichia coli O157:H7.